The chain runs to 645 residues: Threonine--tRNA ligase (645 aa).

Residues 1–61 (MIKITLPDGS…TSDSTVQLLT (61 aa)) enclose the TGS domain. Positions 242-541 (DHRKLGKELE…LIEHVAGNFP (300 aa)) are catalytic. Positions 337, 388, and 518 each coordinate Zn(2+).

This sequence belongs to the class-II aminoacyl-tRNA synthetase family. In terms of assembly, homodimer. Zn(2+) is required as a cofactor.

It is found in the cytoplasm. It catalyses the reaction tRNA(Thr) + L-threonine + ATP = L-threonyl-tRNA(Thr) + AMP + diphosphate + H(+). In terms of biological role, catalyzes the attachment of threonine to tRNA(Thr) in a two-step reaction: L-threonine is first activated by ATP to form Thr-AMP and then transferred to the acceptor end of tRNA(Thr). Also edits incorrectly charged L-seryl-tRNA(Thr). The sequence is that of Threonine--tRNA ligase from Cytophaga hutchinsonii (strain ATCC 33406 / DSM 1761 / CIP 103989 / NBRC 15051 / NCIMB 9469 / D465).